The sequence spans 397 residues: ATP-dependent RNA helicase eIF4A (397 aa).

Positions 23 to 51 (YKFDDLNLKPNIVRGIFGYGYETPSAIQQ) match the Q motif motif. Residues 54 to 224 (ILPITEGRDV…TKFMNNPVRI (171 aa)) form the Helicase ATP-binding domain. Position 67 to 74 (67 to 74 (AQSGTGKT)) interacts with ATP. The DEAD box motif lies at 172-175 (DEAD). The region spanning 235–396 (GIKQFYINVE…EMPADIGALF (162 aa)) is the Helicase C-terminal domain.

It belongs to the DEAD box helicase family. eIF4A subfamily. Component of the eIF4F complex, which composition varies with external and internal environmental conditions. It is composed of at least eIF4A, eIF4E and eIF4G.

It is found in the cytoplasm. It catalyses the reaction ATP + H2O = ADP + phosphate + H(+). Functionally, ATP-dependent RNA helicase which is a subunit of the eIF4F complex involved in cap recognition and is required for mRNA binding to ribosome. In the current model of translation initiation, eIF4A unwinds RNA secondary structures in the 5'-UTR of mRNAs which is necessary to allow efficient binding of the small ribosomal subunit, and subsequent scanning for the initiator codon. This is ATP-dependent RNA helicase eIF4A (TIF1) from Candida albicans (strain SC5314 / ATCC MYA-2876) (Yeast).